The primary structure comprises 309 residues: Ribosomal protein L11 methyltransferase (309 aa).

Thr152, Gly178, Asp200, and Asn242 together coordinate S-adenosyl-L-methionine.

This sequence belongs to the methyltransferase superfamily. PrmA family.

It is found in the cytoplasm. It catalyses the reaction L-lysyl-[protein] + 3 S-adenosyl-L-methionine = N(6),N(6),N(6)-trimethyl-L-lysyl-[protein] + 3 S-adenosyl-L-homocysteine + 3 H(+). Methylates ribosomal protein L11. In Pelobacter propionicus (strain DSM 2379 / NBRC 103807 / OttBd1), this protein is Ribosomal protein L11 methyltransferase.